A 498-amino-acid chain; its full sequence is Glycerol kinase (498 aa).

T11 contributes to the ADP binding site. Residues T11, S12, and S13 each contribute to the ATP site. T11 is a sn-glycerol 3-phosphate binding site. R15 is a binding site for ADP. Sn-glycerol 3-phosphate is bound by residues R81, E82, Y133, and D242. Positions 81, 82, 133, 242, and 243 each coordinate glycerol. Residues T264 and G307 each coordinate ADP. ATP is bound by residues T264, G307, Q311, and G412. ADP is bound by residues G412 and N416.

Belongs to the FGGY kinase family.

The catalysed reaction is glycerol + ATP = sn-glycerol 3-phosphate + ADP + H(+). The protein operates within polyol metabolism; glycerol degradation via glycerol kinase pathway; sn-glycerol 3-phosphate from glycerol: step 1/1. Inhibited by fructose 1,6-bisphosphate (FBP). In terms of biological role, key enzyme in the regulation of glycerol uptake and metabolism. Catalyzes the phosphorylation of glycerol to yield sn-glycerol 3-phosphate. This is Glycerol kinase from Acidovorax sp. (strain JS42).